The following is a 239-amino-acid chain: MQKLELLYEGKAKRIYRTESADMVWVEYKDSATAFNGEKKETITGKGRLNNEITTLLFRKLQEVGIKTHFVEKLSETEQLVKKVSIIPLEVVTRNVIAGSLSKRLGMEEGTVLAEPIVEFYFKDDDLGDPLVTEDHIRVLNVASPEQVSVLRDMALQINQVLIDHFASCRVRLVDFKLEFGVTEEGEIILADEISPDTCRLWDETSNEKFDKDVFRRDLGNLTEAYEEILKRLGGISHV.

It belongs to the SAICAR synthetase family.

It catalyses the reaction 5-amino-1-(5-phospho-D-ribosyl)imidazole-4-carboxylate + L-aspartate + ATP = (2S)-2-[5-amino-1-(5-phospho-beta-D-ribosyl)imidazole-4-carboxamido]succinate + ADP + phosphate + 2 H(+). It participates in purine metabolism; IMP biosynthesis via de novo pathway; 5-amino-1-(5-phospho-D-ribosyl)imidazole-4-carboxamide from 5-amino-1-(5-phospho-D-ribosyl)imidazole-4-carboxylate: step 1/2. The chain is Phosphoribosylaminoimidazole-succinocarboxamide synthase from Bacillus cereus (strain G9842).